A 177-amino-acid polypeptide reads, in one-letter code: CASP-like protein 4D1 (177 aa).

Topologically, residues 1-20 (MTAPTAPSMAAPPAPSMVSR) are cytoplasmic. Residues 21–41 (MTALFLRVLTFAFLMVSLVIM) traverse the membrane as a helical segment. Residues 42–66 (TTNTGTIEIGIDEFKVRSKDFYSYR) lie on the Extracellular side of the membrane. The chain crosses the membrane as a helical span at residues 67 to 87 (YMLAAIAFGLTYTILQIALTL). Topologically, residues 88–107 (NHISKRNGAQTSGDGNLVFD) are cytoplasmic. The helical transmembrane segment at 108–128 (FYGDKVVSYILATGAAAAFGA) threads the bilayer. Residues 129–153 (TKELKTQLAGLGGDKFFNKGYASAS) lie on the Extracellular side of the membrane. A helical transmembrane segment spans residues 154–174 (LLLLGFVCTAILSVFSSYALP). At 175-177 (KKV) the chain is on the cytoplasmic side.

It belongs to the Casparian strip membrane proteins (CASP) family. In terms of assembly, homodimer and heterodimers.

The protein resides in the cell membrane. The chain is CASP-like protein 4D1 from Populus trichocarpa (Western balsam poplar).